The following is a 609-amino-acid chain: Leukotriene A-4 hydrolase (609 aa).

Residues Gln-131–Gln-133 and Pro-263–Glu-268 each bind a peptide. His-292 is a binding site for Zn(2+). Glu-293 acts as the Proton acceptor in catalysis. Zn(2+) contacts are provided by His-296 and Glu-315. Tyr-380 acts as the Proton donor in catalysis. Arg-560–Lys-562 contributes to the a peptide binding site.

Belongs to the peptidase M1 family. As to quaternary structure, homodimer. The cofactor is Zn(2+). Expressed in oocytes.

The protein resides in the cytoplasm. The enzyme catalyses Release of the N-terminal residue from a tripeptide.. It catalyses the reaction leukotriene A4 + H2O = leukotriene B4. The protein operates within lipid metabolism; leukotriene B4 biosynthesis. With respect to regulation, the epoxide hydrolase activity is mildly restrained by suicide inactivation, possibly involving binding of LTA4 to Tyr-380. In terms of biological role, bifunctional zinc metalloenzyme that comprises both epoxide hydrolase (EH) and aminopeptidase activities. Acts as an epoxide hydrolase to catalyze the conversion of leukotriene A4 (LTA4) to the pro-inflammatory mediator leukotriene B4 (LTB4). During the conversion of LTA4 to LTB4, a second product is formed, the isomeric delta6-trans-delta8-cis-LTB4 (5S,12R-dihydroxy-6,10-trans-8,14-cis-eicosatetraenoic acid), with a relative formation of 10% delta6-trans-delta8-cis-LTB4 compared to 90% LTB4. The production of delta6-trans-delta8-cis-LTB4 seems to depend on the phenylalanine residue at position 375. Also has aminopeptidase activity. This Xenopus laevis (African clawed frog) protein is Leukotriene A-4 hydrolase.